A 388-amino-acid polypeptide reads, in one-letter code: Galactokinase (388 aa).

33–36 serves as a coordination point for substrate; the sequence is EHTD. Residues Ser67 and 124–130 each bind ATP; that span reads GSGLSSS. Residues Ser130 and Glu162 each contribute to the Mg(2+) site. Catalysis depends on Asp174, which acts as the Proton acceptor. Tyr224 contributes to the substrate binding site.

The protein belongs to the GHMP kinase family. GalK subfamily.

It is found in the cytoplasm. The catalysed reaction is alpha-D-galactose + ATP = alpha-D-galactose 1-phosphate + ADP + H(+). Its pathway is carbohydrate metabolism; galactose metabolism. Catalyzes the transfer of the gamma-phosphate of ATP to D-galactose to form alpha-D-galactose-1-phosphate (Gal-1-P). This Streptococcus thermophilus (strain ATCC BAA-491 / LMD-9) protein is Galactokinase.